A 474-amino-acid chain; its full sequence is 4-aminobutyrate aminotransferase (474 aa).

Over residues 1 to 13 (MSSTATVTESTHF) the composition is skewed to polar residues. Residues 1 to 31 (MSSTATVTESTHFFPNEPQGPSIKTETIPGP) are disordered. 142 to 143 (GS) provides a ligand contact to pyridoxal 5'-phosphate. Position 199 (arginine 199) interacts with substrate. The residue at position 333 (lysine 333) is an N6-(pyridoxal phosphate)lysine. Threonine 357 is a binding site for pyridoxal 5'-phosphate.

The protein belongs to the class-III pyridoxal-phosphate-dependent aminotransferase family. In terms of assembly, homodimer. Pyridoxal 5'-phosphate is required as a cofactor.

Its subcellular location is the cytoplasm. The catalysed reaction is 4-aminobutanoate + 2-oxoglutarate = succinate semialdehyde + L-glutamate. In terms of biological role, required for the degradation of gamma-aminobutyric acid (GABA), which is important for utilization of GABA as nitrogen source. Deaminates GABA to succinate-semialdehyde, which in turn is converted to succinate by the succinate semialdehyde dehydrogenase. Cannot transaminate beta-alanine (BAL). The sequence is that of 4-aminobutyrate aminotransferase (uga1) from Schizosaccharomyces pombe (strain 972 / ATCC 24843) (Fission yeast).